A 116-amino-acid polypeptide reads, in one-letter code: Iron-sulfur cluster insertion protein ErpA (116 aa).

Positions 44, 108, and 110 each coordinate iron-sulfur cluster.

It belongs to the HesB/IscA family. Homodimer. Iron-sulfur cluster is required as a cofactor.

Functionally, required for insertion of 4Fe-4S clusters for at least IspG. In Pseudomonas putida (strain ATCC 47054 / DSM 6125 / CFBP 8728 / NCIMB 11950 / KT2440), this protein is Iron-sulfur cluster insertion protein ErpA.